The chain runs to 97 residues: Protein RADIALIS-like 6 (97 aa).

In terms of domain architecture, SANT spans 7-59 (SSISPWTFSQNKMFERALAVYDKDTPDRWHNVAKAVGGKTVEEVKRHYDILVE).

In terms of tissue distribution, expressed in the micropylar endosperm surrounding globular-stage embryos but no expression was detected elsewhere, including floral tissues.

It localises to the nucleus. Probable transcription factor. The sequence is that of Protein RADIALIS-like 6 (RL6) from Arabidopsis thaliana (Mouse-ear cress).